The following is an 87-amino-acid chain: Protein U62 (87 aa).

This sequence belongs to the herpesviridae UL91 family.

The polypeptide is Protein U62 (U62) (Human herpesvirus 6B (strain Z29) (HHV-6 variant B)).